Consider the following 363-residue polypeptide: UDP-N-acetylglucosamine--N-acetylmuramyl-(pentapeptide) pyrophosphoryl-undecaprenol N-acetylglucosamine transferase (363 aa).

UDP-N-acetyl-alpha-D-glucosamine contacts are provided by residues 21–23 (TGG), Asn129, Arg170, Ser196, and Gln290.

It belongs to the glycosyltransferase 28 family. MurG subfamily.

The protein localises to the cell inner membrane. It carries out the reaction di-trans,octa-cis-undecaprenyl diphospho-N-acetyl-alpha-D-muramoyl-L-alanyl-D-glutamyl-meso-2,6-diaminopimeloyl-D-alanyl-D-alanine + UDP-N-acetyl-alpha-D-glucosamine = di-trans,octa-cis-undecaprenyl diphospho-[N-acetyl-alpha-D-glucosaminyl-(1-&gt;4)]-N-acetyl-alpha-D-muramoyl-L-alanyl-D-glutamyl-meso-2,6-diaminopimeloyl-D-alanyl-D-alanine + UDP + H(+). Its pathway is cell wall biogenesis; peptidoglycan biosynthesis. Its function is as follows. Cell wall formation. Catalyzes the transfer of a GlcNAc subunit on undecaprenyl-pyrophosphoryl-MurNAc-pentapeptide (lipid intermediate I) to form undecaprenyl-pyrophosphoryl-MurNAc-(pentapeptide)GlcNAc (lipid intermediate II). In Synechococcus sp. (strain ATCC 27144 / PCC 6301 / SAUG 1402/1) (Anacystis nidulans), this protein is UDP-N-acetylglucosamine--N-acetylmuramyl-(pentapeptide) pyrophosphoryl-undecaprenol N-acetylglucosamine transferase.